A 132-amino-acid polypeptide reads, in one-letter code: CLAVATA3/ESR (CLE)-related protein ESR2 (132 aa).

Positions 1 to 26 (MASRMGMVAIVSLFVCALVASTSVNA) are cleaved as a signal peptide. A disordered region spans residues 68-132 (NRASKQLDSE…IGPPPFLDRY (65 aa)). Hydroxyproline is present on residues Pro82 and Pro85. The O-linked (Ara...) hydroxyproline glycan is linked to Pro85. Pro residues predominate over residues 123–132 (IGPPPFLDRY).

The protein belongs to the CLV3/ESR signal peptide family. The O-glycosylation (arabinosylation) of the hydroxyproline Pro-85 enhances binding affinity of the ESR2p peptide for its receptor. In terms of tissue distribution, seed endosperm.

It localises to the secreted. Its subcellular location is the extracellular space. Extracellular signal peptide that regulates cell fate. The polypeptide is CLAVATA3/ESR (CLE)-related protein ESR2 (Zea mays (Maize)).